Consider the following 149-residue polypeptide: 3-dehydroquinate dehydratase (149 aa).

Tyr-21 acts as the Proton acceptor in catalysis. Substrate is bound by residues Asn-73, His-79, and Asp-86. The Proton donor role is filled by His-99. Substrate contacts are provided by residues 100-101 and Arg-110; that span reads LT.

Belongs to the type-II 3-dehydroquinase family. Homododecamer.

It carries out the reaction 3-dehydroquinate = 3-dehydroshikimate + H2O. It participates in metabolic intermediate biosynthesis; chorismate biosynthesis; chorismate from D-erythrose 4-phosphate and phosphoenolpyruvate: step 3/7. In terms of biological role, catalyzes a trans-dehydration via an enolate intermediate. The sequence is that of 3-dehydroquinate dehydratase from Thermus thermophilus (strain ATCC BAA-163 / DSM 7039 / HB27).